A 302-amino-acid chain; its full sequence is Urease accessory protein UreD 2 (302 aa).

This sequence belongs to the UreD family. In terms of assembly, ureD, UreF and UreG form a complex that acts as a GTP-hydrolysis-dependent molecular chaperone, activating the urease apoprotein by helping to assemble the nickel containing metallocenter of UreC. The UreE protein probably delivers the nickel.

Its subcellular location is the cytoplasm. In terms of biological role, required for maturation of urease via the functional incorporation of the urease nickel metallocenter. The sequence is that of Urease accessory protein UreD 2 from Brucella canis (strain ATCC 23365 / NCTC 10854 / RM-666).